The chain runs to 230 residues: Leucyl/phenylalanyl-tRNA--protein transferase (230 aa).

The protein belongs to the L/F-transferase family.

The protein resides in the cytoplasm. The catalysed reaction is N-terminal L-lysyl-[protein] + L-leucyl-tRNA(Leu) = N-terminal L-leucyl-L-lysyl-[protein] + tRNA(Leu) + H(+). It catalyses the reaction N-terminal L-arginyl-[protein] + L-leucyl-tRNA(Leu) = N-terminal L-leucyl-L-arginyl-[protein] + tRNA(Leu) + H(+). The enzyme catalyses L-phenylalanyl-tRNA(Phe) + an N-terminal L-alpha-aminoacyl-[protein] = an N-terminal L-phenylalanyl-L-alpha-aminoacyl-[protein] + tRNA(Phe). Its function is as follows. Functions in the N-end rule pathway of protein degradation where it conjugates Leu, Phe and, less efficiently, Met from aminoacyl-tRNAs to the N-termini of proteins containing an N-terminal arginine or lysine. This chain is Leucyl/phenylalanyl-tRNA--protein transferase, found in Rhodopseudomonas palustris (strain BisB18).